Consider the following 412-residue polypeptide: MDSWAGHEVPRLPGRGGPLMLFDSARQGVAASTPTGTGTMYVCGITPYDATHLGHAATMITFDLVQRVWRDAGLDVTYVQNVTDIDDPLLERAARDGEDWKVLAMRETALFREDMVALRIIPPAHYVGAVESIPDIAERVLTLVKEEAAYRIDDGTGDVYFDISAAPRFGYESNLGREQMLKIFPERGGDPDRAGKRDPLDPLLWRSARADEPSWPGGGLGPGRPGWHIECAVIALNLLGHRIDVQGGGNDLIFPHHECSAAHAELLTGQSPFAQHYVHAGMIGLAGEKMSKSRGNLVFVSRLRADRVDPMAVRLALMSGHYRSDRSWNDDLLVTAQKRLDRWRRAAAAPSGPSARTFLAAFRERLADDLDSPGALTLADSWADAALVGTGDDQAAPALFARAVDALLGVRL.

C43 lines the Zn(2+) pocket. Residues 43 to 46 (CGIT), T58, and 81 to 83 (NVT) each bind L-cysteinyl-5'-AMP. Residues 45 to 55 (ITPYDATHLGH) carry the 'HIGH' region motif. A 'ERGGDP' region motif is present at residues 186–191 (ERGGDP). W227 contacts L-cysteinyl-5'-AMP. Zn(2+) is bound at residue C231. 249-251 (GND) is a binding site for L-cysteinyl-5'-AMP. H256 provides a ligand contact to Zn(2+). Position 283 (I283) interacts with L-cysteinyl-5'-AMP. The short motif at 289–293 (KMSKS) is the 'KMSKS' region element.

This sequence belongs to the class-I aminoacyl-tRNA synthetase family. MshC subfamily. Monomer. The cofactor is Zn(2+).

The enzyme catalyses 1D-myo-inositol 2-amino-2-deoxy-alpha-D-glucopyranoside + L-cysteine + ATP = 1D-myo-inositol 2-(L-cysteinylamino)-2-deoxy-alpha-D-glucopyranoside + AMP + diphosphate + H(+). In terms of biological role, catalyzes the ATP-dependent condensation of GlcN-Ins and L-cysteine to form L-Cys-GlcN-Ins. This chain is L-cysteine:1D-myo-inositol 2-amino-2-deoxy-alpha-D-glucopyranoside ligase, found in Salinispora arenicola (strain CNS-205).